The sequence spans 259 residues: Proteasome subunit alpha (259 aa).

The segment covering 233 to 243 (PAAPAAASESA) has biased composition (low complexity). The segment at 233–259 (PAAPAAASESAPEPKPDTETKPADPQD) is disordered. Positions 244–259 (PEPKPDTETKPADPQD) are enriched in basic and acidic residues.

The protein belongs to the peptidase T1A family. In terms of assembly, the 20S proteasome core is composed of 14 alpha and 14 beta subunits that assemble into four stacked heptameric rings, resulting in a barrel-shaped structure. The two inner rings, each composed of seven catalytic beta subunits, are sandwiched by two outer rings, each composed of seven alpha subunits. The catalytic chamber with the active sites is on the inside of the barrel. Has a gated structure, the ends of the cylinder being occluded by the N-termini of the alpha-subunits. Is capped by the proteasome-associated ATPase, ARC.

Its subcellular location is the cytoplasm. It functions in the pathway protein degradation; proteasomal Pup-dependent pathway. Its activity is regulated as follows. The formation of the proteasomal ATPase ARC-20S proteasome complex, likely via the docking of the C-termini of ARC into the intersubunit pockets in the alpha-rings, may trigger opening of the gate for substrate entry. Interconversion between the open-gate and close-gate conformations leads to a dynamic regulation of the 20S proteasome proteolysis activity. Functionally, component of the proteasome core, a large protease complex with broad specificity involved in protein degradation. The protein is Proteasome subunit alpha of Rhodococcus opacus (strain B4).